Reading from the N-terminus, the 149-residue chain is Large ribosomal subunit protein bL9 (149 aa).

This sequence belongs to the bacterial ribosomal protein bL9 family.

Its function is as follows. Binds to the 23S rRNA. This Fervidobacterium nodosum (strain ATCC 35602 / DSM 5306 / Rt17-B1) protein is Large ribosomal subunit protein bL9.